Reading from the N-terminus, the 229-residue chain is ATP synthase subunit a (229 aa).

6 consecutive transmembrane segments (helical) span residues 14 to 34 (LIAI…ALIL), 68 to 88 (YFPF…LGLF), 98 to 118 (IVVT…GGLW), 124 to 144 (FLSI…LVLI), 157 to 179 (GVRL…GFGF), and 189 to 209 (NIFP…VAVI).

It belongs to the ATPase A chain family. As to quaternary structure, F-type ATPases have 2 components, CF(1) - the catalytic core - and CF(0) - the membrane proton channel. CF(1) has five subunits: alpha(3), beta(3), gamma(1), delta(1), epsilon(1). CF(0) has three main subunits: a, b and c.

Its subcellular location is the mitochondrion inner membrane. Its function is as follows. Mitochondrial membrane ATP synthase (F(1)F(0) ATP synthase or Complex V) produces ATP from ADP in the presence of a proton gradient across the membrane which is generated by electron transport complexes of the respiratory chain. F-type ATPases consist of two structural domains, F(1) - containing the extramembraneous catalytic core and F(0) - containing the membrane proton channel, linked together by a central stalk and a peripheral stalk. During catalysis, ATP synthesis in the catalytic domain of F(1) is coupled via a rotary mechanism of the central stalk subunits to proton translocation. Key component of the proton channel; it may play a direct role in the translocation of protons across the membrane. The protein is ATP synthase subunit a (ATPASE6) of Metridium senile (Brown sea anemone).